A 422-amino-acid polypeptide reads, in one-letter code: Calpain-2 catalytic subunit (422 aa).

The Calpain catalytic domain maps to 1 to 66 (QKLIRIRNPW…YSRLEICNLT (66 aa)). Residue Asn-8 is part of the active site. Ca(2+) contacts are provided by Glu-14, Asp-21, and Glu-45. The segment at 67–236 (PDTLTSDTYK…KKADYQAVDD (170 aa)) is domain III. The interval 237–251 (EIEADLEEADVSEDD) is linker. Residues 252–422 (IDDGFRRLFA…LISWLCFSVL (171 aa)) form a domain IV region. Positions 264, 267, 269, 274, 307, 309, 311, 313, 318, 337, 339, 341, 343, 348, 380, and 383 each coordinate Ca(2+). 2 EF-hand domains span residues 294 to 327 (LSIE…TKIQ) and 324 to 359 (TKIQ…AGFK). The EF-hand 3 domain maps to 389–422 (VRLETLFKIFKQLDPDNTGMIQLDLISWLCFSVL).

This sequence belongs to the peptidase C2 family. In terms of assembly, forms a heterodimer with a small (regulatory) subunit (CAPNS1). Interacts with CPEB3; this leads to cleavage of CPEB3. It depends on Ca(2+) as a cofactor. Ubiquitous.

The protein localises to the cytoplasm. It is found in the cell membrane. It carries out the reaction Broad endopeptidase specificity.. With respect to regulation, activated by 200-1000 micromolar concentrations of calcium and inhibited by calpastatin. Its function is as follows. Calcium-regulated non-lysosomal thiol-protease which catalyzes limited proteolysis of substrates involved in cytoskeletal remodeling and signal transduction. Proteolytically cleaves MYOC at 'Arg-226'. Proteolytically cleaves CPEB3 following neuronal stimulation which abolishes CPEB3 translational repressor activity, leading to translation of CPEB3 target mRNAs. In Oryctolagus cuniculus (Rabbit), this protein is Calpain-2 catalytic subunit (CAPN2).